The sequence spans 340 residues: GTPase Obg (340 aa).

In terms of domain architecture, Obg spans Met-1–Leu-159. The OBG-type G domain maps to Ser-160 to Ser-329. GTP contacts are provided by residues Gly-166–Ser-173, Phe-191–Arg-195, Asp-212–Gly-215, Asn-279–Asp-282, and Asn-310–Asp-312. Positions 173 and 193 each coordinate Mg(2+).

It belongs to the TRAFAC class OBG-HflX-like GTPase superfamily. OBG GTPase family. As to quaternary structure, monomer. Requires Mg(2+) as cofactor.

Its subcellular location is the cytoplasm. Its function is as follows. An essential GTPase which binds GTP, GDP and possibly (p)ppGpp with moderate affinity, with high nucleotide exchange rates and a fairly low GTP hydrolysis rate. Plays a role in control of the cell cycle, stress response, ribosome biogenesis and in those bacteria that undergo differentiation, in morphogenesis control. The chain is GTPase Obg from Wolbachia sp. subsp. Drosophila simulans (strain wRi).